The chain runs to 704 residues: Elongation factor G 1 (704 aa).

The tr-type G domain occupies 8–291 (ERYRNIGISA…AVIDYLPSPA (284 aa)). Residues 17-24 (AHIDAGKT), 88-92 (DTPGH), and 142-145 (NKMD) each bind GTP.

It belongs to the TRAFAC class translation factor GTPase superfamily. Classic translation factor GTPase family. EF-G/EF-2 subfamily.

Its subcellular location is the cytoplasm. Catalyzes the GTP-dependent ribosomal translocation step during translation elongation. During this step, the ribosome changes from the pre-translocational (PRE) to the post-translocational (POST) state as the newly formed A-site-bound peptidyl-tRNA and P-site-bound deacylated tRNA move to the P and E sites, respectively. Catalyzes the coordinated movement of the two tRNA molecules, the mRNA and conformational changes in the ribosome. This chain is Elongation factor G 1, found in Burkholderia pseudomallei (strain 1710b).